A 30-amino-acid chain; its full sequence is Serum amyloid P-component (30 aa).

The Pentraxin (PTX) domain maps to 1–30; the sequence is APQDLSGKMFIFPQETSTANVXLTARSQDF.

It belongs to the pentraxin family. As to quaternary structure, homopentamer. Discoid arrangement of 5 covalently bound subunits. Ca(2+) is required as a cofactor.

It localises to the secreted. This is Serum amyloid P-component from Anarhichas lupus (Atlantic wolffish).